We begin with the raw amino-acid sequence, 264 residues long: Transcription factor bHLH52 (264 aa).

Residues 134–183 (RELSAQSIAARKRRRRITEKTQELGKLIPGSQKHNTAEMFNAAAKYVKFL) form the bHLH domain.

As to quaternary structure, homodimer. Expressed constitutively in roots, leaves, stems, and flowers.

Its subcellular location is the nucleus. This chain is Transcription factor bHLH52 (BHLH52), found in Arabidopsis thaliana (Mouse-ear cress).